Here is a 178-residue protein sequence, read N- to C-terminus: C-phycoerythrin class 2 subunit beta (178 aa).

Phycourobilin-binding residues include Cys-50 and Cys-61. Residues Cys-82 and Cys-159 each contribute to the (2R,3E)-phycoerythrobilin site.

Belongs to the phycobiliprotein family. Heterodimer of an alpha and a beta chain. In terms of processing, contains two covalently linked phycoerythrobilin chromophores and one covalently linked phycourobilin chromophore.

The protein localises to the cellular thylakoid membrane. In terms of biological role, light-harvesting photosynthetic bile pigment-protein from the phycobiliprotein complex. This Synechococcus sp. (strain WH8020) protein is C-phycoerythrin class 2 subunit beta (mpeB).